We begin with the raw amino-acid sequence, 86 residues long: Putative membrane protein insertion efficiency factor (86 aa).

This sequence belongs to the UPF0161 family.

Its subcellular location is the cell inner membrane. Its function is as follows. Could be involved in insertion of integral membrane proteins into the membrane. The chain is Putative membrane protein insertion efficiency factor from Pasteurella multocida (strain Pm70).